The primary structure comprises 215 residues: CASP-like protein UU3 (215 aa).

Over 1–44 (MATAWESEYFDKVTPGERERAVPPMVPQQTPPPVYIQPQVSRNG) the chain is Cytoplasmic. Residues 45 to 65 (IVASIVLRLLTLIFAVVALAV) form a helical membrane-spanning segment. The Extracellular portion of the chain corresponds to 66-93 (LASNTGSFQVSTGSATSVKTIKFTILSA). The chain crosses the membrane as a helical span at residues 94–114 (FTYLFAVCGVVAVYSLLLIIV). The Cytoplasmic portion of the chain corresponds to 115-128 (EMIDLAVRGFTTHT). The chain crosses the membrane as a helical span at residues 129-149 (LVAIFVFVLDQTMAYVLISAA). The Extracellular portion of the chain corresponds to 150-185 (SASANGVKVSRDESNITGYKFDISCSNLGIDDYCTK). Asn-164 carries an N-linked (GlcNAc...) asparagine glycan. The helical transmembrane segment at 186-206 (ASASVAIAFIAFLFMAITAGV) threads the bilayer. Residues 207 to 215 (SARRLFKLP) lie on the Cytoplasmic side of the membrane.

This sequence belongs to the Casparian strip membrane proteins (CASP) family. In terms of assembly, homodimer and heterodimers.

It is found in the cell membrane. The polypeptide is CASP-like protein UU3 (Physcomitrium patens (Spreading-leaved earth moss)).